A 257-amino-acid polypeptide reads, in one-letter code: 5'-nucleotidase SurE (257 aa).

The a divalent metal cation site is built by aspartate 13, aspartate 14, serine 44, and asparagine 100.

It belongs to the SurE nucleotidase family. A divalent metal cation is required as a cofactor.

It localises to the cytoplasm. It catalyses the reaction a ribonucleoside 5'-phosphate + H2O = a ribonucleoside + phosphate. In terms of biological role, nucleotidase that shows phosphatase activity on nucleoside 5'-monophosphates. The protein is 5'-nucleotidase SurE of Phocaeicola vulgatus (strain ATCC 8482 / DSM 1447 / JCM 5826 / CCUG 4940 / NBRC 14291 / NCTC 11154) (Bacteroides vulgatus).